We begin with the raw amino-acid sequence, 181 residues long: Acireductone dioxygenase (181 aa).

4 residues coordinate Fe(2+): His-97, His-99, Glu-103, and His-141. The Ni(2+) site is built by His-97, His-99, Glu-103, and His-141.

This sequence belongs to the acireductone dioxygenase (ARD) family. Monomer. Fe(2+) is required as a cofactor. It depends on Ni(2+) as a cofactor.

It catalyses the reaction 1,2-dihydroxy-5-(methylsulfanyl)pent-1-en-3-one + O2 = 3-(methylsulfanyl)propanoate + CO + formate + 2 H(+). The catalysed reaction is 1,2-dihydroxy-5-(methylsulfanyl)pent-1-en-3-one + O2 = 4-methylsulfanyl-2-oxobutanoate + formate + 2 H(+). It participates in amino-acid biosynthesis; L-methionine biosynthesis via salvage pathway; L-methionine from S-methyl-5-thio-alpha-D-ribose 1-phosphate: step 5/6. In terms of biological role, catalyzes 2 different reactions between oxygen and the acireductone 1,2-dihydroxy-3-keto-5-methylthiopentene (DHK-MTPene) depending upon the metal bound in the active site. Fe-containing acireductone dioxygenase (Fe-ARD) produces formate and 2-keto-4-methylthiobutyrate (KMTB), the alpha-ketoacid precursor of methionine in the methionine recycle pathway. Ni-containing acireductone dioxygenase (Ni-ARD) produces methylthiopropionate, carbon monoxide and formate, and does not lie on the methionine recycle pathway. The sequence is that of Acireductone dioxygenase from Pseudomonas syringae pv. tomato (strain ATCC BAA-871 / DC3000).